The chain runs to 182 residues: ATP synthase subunit delta (182 aa).

Belongs to the ATPase delta chain family. As to quaternary structure, F-type ATPases have 2 components, F(1) - the catalytic core - and F(0) - the membrane proton channel. F(1) has five subunits: alpha(3), beta(3), gamma(1), delta(1), epsilon(1). F(0) has three main subunits: a(1), b(2) and c(10-14). The alpha and beta chains form an alternating ring which encloses part of the gamma chain. F(1) is attached to F(0) by a central stalk formed by the gamma and epsilon chains, while a peripheral stalk is formed by the delta and b chains.

It is found in the cell membrane. Its function is as follows. F(1)F(0) ATP synthase produces ATP from ADP in the presence of a proton or sodium gradient. F-type ATPases consist of two structural domains, F(1) containing the extramembraneous catalytic core and F(0) containing the membrane proton channel, linked together by a central stalk and a peripheral stalk. During catalysis, ATP synthesis in the catalytic domain of F(1) is coupled via a rotary mechanism of the central stalk subunits to proton translocation. In terms of biological role, this protein is part of the stalk that links CF(0) to CF(1). It either transmits conformational changes from CF(0) to CF(1) or is implicated in proton conduction. The chain is ATP synthase subunit delta from Lachnoclostridium phytofermentans (strain ATCC 700394 / DSM 18823 / ISDg) (Clostridium phytofermentans).